A 110-amino-acid polypeptide reads, in one-letter code: ORC1-type DNA replication protein 3 (110 aa).

Residue 8 to 12 participates in ATP binding; the sequence is SGKSL.

The protein belongs to the CDC6/cdc18 family.

In terms of biological role, involved in regulation of DNA replication. The polypeptide is ORC1-type DNA replication protein 3 (orc3) (Halobacterium salinarum (strain ATCC 700922 / JCM 11081 / NRC-1) (Halobacterium halobium)).